The following is a 580-amino-acid chain: Cytochrome P450 monooxygenase helB1 (580 aa).

The segment at 1–32 (MRTYAIRPVSNRLPGPIEPKKHRRDRDNSTTG) is disordered. An N-linked (GlcNAc...) asparagine glycan is attached at asparagine 28. A helical membrane pass occupies residues 61–81 (FLNTISVLQVLAAIFIGALTY). Cysteine 497 lines the heme pocket.

This sequence belongs to the cytochrome P450 family. Requires heme as cofactor.

It localises to the membrane. The protein operates within mycotoxin biosynthesis. In terms of biological role, cytochrome P450 monooxygenase; part of the gene cluster that mediates the biosynthesis of helvolic acid, an antibacterial nortriterpenoid. Protostadienol synthase helA cyclizes (3S)-oxidosqualene to (17Z)-protosta-17(20),24-dien-3-beta-ol (protostadienol). The synthesis of protostadienol is followed by several steps of monooxygenation, dehydrogenation, and acyl transfer to yield the final helvolic acid. Following the cyclization to the tetracyclic protostadienol by helA, cytochrome P450 monooxygenases helB1-mediated and helB2-mediated oxidation at C-4 and C-16, acyltransferase helD2-dependent acetylation of 16-OH, oxidation of C-21 by cytochrome P450 monooxygenase helB4, and short chain dehydrogenase helC-dependent oxidative decarboxylation yield the fusidane skeleton. This intermediate is further modified in three additional steps mediated by the cytochrome P450 monooxygenase helB3, the acyltransferase helD1, and the 3-ketosteroid 1-dehydrogenase helE to give helvolic acid. Compared with the late stages in the biosynthesis of helvolic acid, enzymes involved in the early stage modifications act in a relatively strict order. The hydroxylation of C-16 by helB1 and subsequent acetylation by helD2 should occur before the helB3-mediated oxidation of C-21. C-4 demethylation in fusidane-type antibiotics proceeds in an unusual manner though it is also achieved by oxidative decarboxylation. The methyl group at C-4 beta position is oxidized by helB1 and subsequently removed by the short chain dehydrogenase helC. In Aspergillus fumigatus (strain ATCC MYA-4609 / CBS 101355 / FGSC A1100 / Af293) (Neosartorya fumigata), this protein is Cytochrome P450 monooxygenase helB1.